Consider the following 225-residue polypeptide: Peroxiredoxin-2E-2, chloroplastic (225 aa).

A chloroplast-targeting transit peptide spans 1-42 (MAAPTAAALSTLSTASVTSGKRFITSSFSLSFSSRPLATGVR). The Thioredoxin domain occupies 63–225 (IAVGDKLPDA…SSAEEMLKAL (163 aa)). Cys-111 serves as the catalytic Cysteine sulfenic acid (-SOH) intermediate.

The protein belongs to the peroxiredoxin family. Prx5 subfamily. In terms of assembly, monomer.

Its subcellular location is the plastid. It localises to the chloroplast stroma. The enzyme catalyses [glutaredoxin]-dithiol + a hydroperoxide = [glutaredoxin]-disulfide + an alcohol + H2O. Thiol-specific peroxidase that catalyzes the reduction of hydrogen peroxide and organic hydroperoxides to water and alcohols, respectively. Plays a role in cell protection against oxidative stress by detoxifying peroxides. May be involved in chloroplast redox homeostasis. In Oryza sativa subsp. japonica (Rice), this protein is Peroxiredoxin-2E-2, chloroplastic (PRXIIE-2).